A 91-amino-acid polypeptide reads, in one-letter code: MPKPNIHPQWYPEAKVYCDGEVIMTVGSTKPELHVDIWSGNHPFFTGTQKIVDAEGRVERFRRKYSGTKPQQTAKGKKAAPKSTPKTNKKG.

Residues 62 to 91 form a disordered region; the sequence is RRKYSGTKPQQTAKGKKAAPKSTPKTNKKG.

The protein belongs to the bacterial ribosomal protein bL31 family. Type A subfamily. Part of the 50S ribosomal subunit.

Functionally, binds the 23S rRNA. This chain is Large ribosomal subunit protein bL31, found in Thermosynechococcus vestitus (strain NIES-2133 / IAM M-273 / BP-1).